A 1435-amino-acid polypeptide reads, in one-letter code: Protein clueless (1435 aa).

The tract at residues 1-97 is disordered; that stretch reads MALEMDSKNS…KPEGDGDADA (97 aa). Positions 18–35 are enriched in low complexity; that stretch reads AAAATTKTNKAKENNNLA. The segment covering 38-50 has biased composition (polar residues); the sequence is KKNQSQNLVNGNG. Residues 58 to 67 show a composition bias toward basic residues; sequence TKKKGKKNRN. S266 is modified (phosphoserine). Residues 420-662 form the Clu domain; the sequence is RAEDAFSSKL…RTFPPDVNFL (243 aa). Basic and acidic residues-rich tracts occupy residues 719–731 and 752–762; these read KKPE…EKKQ and PNEKEKDTPVE. Disordered stretches follow at residues 719 to 762 and 952 to 998; these read KKPE…TPVE and VSND…SSSS. The span at 959–975 shows a compositional bias: basic residues; the sequence is KKRGGNGGKHNKHKSSK. Residues 988 to 998 show a composition bias toward low complexity; sequence NGGSTTSSSSS. TPR repeat units follow at residues 1096–1129, 1222–1255, and 1257–1290; these read AYNF…LNNV, ALID…NLKY, and GNKA…EKET. A disordered region spans residues 1407-1435; that stretch reads EVLAPQDNNKEQAATAQQLTNGDKVAVSS. Residues 1417–1435 show a composition bias toward polar residues; it reads EQAATAQQLTNGDKVAVSS.

Belongs to the CLU family.

Its subcellular location is the cytoplasm. Functionally, mRNA-binding protein involved in proper cytoplasmic distribution of mitochondria. This chain is Protein clueless, found in Drosophila persimilis (Fruit fly).